Reading from the N-terminus, the 392-residue chain is Phosphoglycerate kinase (392 aa).

Residues 21 to 23 (DFN), Arg-36, 59 to 62 (HLGR), Arg-113, and Arg-146 contribute to the substrate site. ATP contacts are provided by residues Lys-197, Glu-319, and 345–348 (GGDT).

It belongs to the phosphoglycerate kinase family. In terms of assembly, monomer.

The protein resides in the cytoplasm. The enzyme catalyses (2R)-3-phosphoglycerate + ATP = (2R)-3-phospho-glyceroyl phosphate + ADP. It participates in carbohydrate degradation; glycolysis; pyruvate from D-glyceraldehyde 3-phosphate: step 2/5. The sequence is that of Phosphoglycerate kinase from Francisella tularensis subsp. novicida (strain U112).